The primary structure comprises 399 residues: Elongation factor Tu (399 aa).

The region spanning 10 to 204 (KPHVNIGTIG…AVDASIPEPE (195 aa)) is the tr-type G domain. A G1 region spans residues 19–26 (GHVDHGKT). 19–26 (GHVDHGKT) provides a ligand contact to GTP. Position 26 (threonine 26) interacts with Mg(2+). The tract at residues 60 to 64 (GITIN) is G2. A G3 region spans residues 81 to 84 (DCPG). GTP-binding positions include 81-85 (DCPGH) and 136-139 (NKCD). The interval 136–139 (NKCD) is G4. A G5 region spans residues 174 to 176 (SGL).

The protein belongs to the TRAFAC class translation factor GTPase superfamily. Classic translation factor GTPase family. EF-Tu/EF-1A subfamily. In terms of assembly, monomer.

The protein localises to the cytoplasm. The enzyme catalyses GTP + H2O = GDP + phosphate + H(+). Functionally, GTP hydrolase that promotes the GTP-dependent binding of aminoacyl-tRNA to the A-site of ribosomes during protein biosynthesis. The protein is Elongation factor Tu of Synechococcus sp. (strain CC9902).